The primary structure comprises 263 residues: MKKSVQKNVKGKQVNLKVKPSVHDLSKTQQTKLTVGSMGLGLIIIQHGPYLQISHLITKGAAARDGTLQPGDVLISVGYANVLGYTLREFLKLLQHITIGTILQIKVYRDFIDIPQEWQEIYDLIPETKFPITRTTKKTEEAKDGSVTSSDDDEAFDTRLKYYKYPRSTGHYPVRRPMSISREWHGYKKKNHVMRVGKDINCDVMIHRDHKKEVRAPSPYWTMVKQDNEISSSSSASSTSDAFWLEDCTPVEKGSSEPVSRVG.

Positions 30-109 (QTKLTVGSMG…GTILQIKVYR (80 aa)) constitute a PDZ domain.

The sequence is that of PDZ domain-containing protein 9 (PDZD9) from Bos taurus (Bovine).